Here is a 246-residue protein sequence, read N- to C-terminus: Orotidine 5'-phosphate decarboxylase (246 aa).

Substrate-binding positions include Asp-22, Lys-44, 71–80, Thr-131, Arg-192, Gln-201, Gly-221, and Arg-222; that span reads DLKFHDIPNT. Catalysis depends on Lys-73, which acts as the Proton donor.

The protein belongs to the OMP decarboxylase family. Type 1 subfamily. Homodimer.

The enzyme catalyses orotidine 5'-phosphate + H(+) = UMP + CO2. It functions in the pathway pyrimidine metabolism; UMP biosynthesis via de novo pathway; UMP from orotate: step 2/2. Catalyzes the decarboxylation of orotidine 5'-monophosphate (OMP) to uridine 5'-monophosphate (UMP). The polypeptide is Orotidine 5'-phosphate decarboxylase (Yersinia enterocolitica serotype O:8 / biotype 1B (strain NCTC 13174 / 8081)).